The chain runs to 366 residues: D-alanine--D-alanine ligase (366 aa).

Residues 145-348 enclose the ATP-grasp domain; sequence KRLLDDAGLA…YQSLITKLIE (204 aa). 175-230 is a binding site for ATP; it reads VEQLGLPLFIKPANLGSSVGISKVNNEAEFNAALSMAFEYDLKVIIESAIVGREIE. Asp-302, Glu-315, and Asn-317 together coordinate Mg(2+).

Belongs to the D-alanine--D-alanine ligase family. Requires Mg(2+) as cofactor. The cofactor is Mn(2+).

The protein resides in the cytoplasm. The catalysed reaction is 2 D-alanine + ATP = D-alanyl-D-alanine + ADP + phosphate + H(+). It functions in the pathway cell wall biogenesis; peptidoglycan biosynthesis. Its function is as follows. Cell wall formation. This chain is D-alanine--D-alanine ligase, found in Proteus mirabilis (strain HI4320).